Here is a 554-residue protein sequence, read N- to C-terminus: Glutamine--tRNA ligase (554 aa).

A 'HIGH' region motif is present at residues 34–44; it reads PEPNGYLHIGH. Residues 35–37 and 41–47 contribute to the ATP site; these read EPN and HIGHAKS. Residues D67 and Y212 each coordinate L-glutamine. ATP contacts are provided by residues T231, 261–262, and 269–271; these read RL and MSK. Residues 268–272 carry the 'KMSKS' region motif; that stretch reads VMSKR.

Belongs to the class-I aminoacyl-tRNA synthetase family. Monomer.

The protein localises to the cytoplasm. It carries out the reaction tRNA(Gln) + L-glutamine + ATP = L-glutaminyl-tRNA(Gln) + AMP + diphosphate. The chain is Glutamine--tRNA ligase from Shigella boydii serotype 4 (strain Sb227).